The primary structure comprises 266 residues: Phosphoethanolamine N-methyltransferase (266 aa).

Glutamine 18 contacts phosphoethanolamine. The active site involves tyrosine 19. Tyrosine 27 contacts phosphoethanolamine. The S-adenosyl-L-methionine site is built by isoleucine 36, serine 37, glycine 63, aspartate 85, isoleucine 86, aspartate 110, isoleucine 111, and arginine 127. Histidine 132 is an active-site residue. Positions 160, 175, 179, 181, and 247 each coordinate phosphoethanolamine.

Belongs to the class I-like SAM-binding methyltransferase superfamily. PEAMT family. In terms of assembly, monomer.

The protein localises to the golgi apparatus membrane. The protein resides in the cytoplasm. The catalysed reaction is phosphoethanolamine + S-adenosyl-L-methionine = N-methylethanolamine phosphate + S-adenosyl-L-homocysteine + H(+). It carries out the reaction N-methylethanolamine phosphate + S-adenosyl-L-methionine = N,N-dimethylethanolamine phosphate + S-adenosyl-L-homocysteine + H(+). The enzyme catalyses N,N-dimethylethanolamine phosphate + S-adenosyl-L-methionine = phosphocholine + S-adenosyl-L-homocysteine + H(+). It functions in the pathway phospholipid metabolism; phosphatidylcholine biosynthesis; phosphocholine from phosphoethanolamine. Inhibited by phosphocholine. Inhibited by hexadecylphosphocholine (miltefosine). Inhibited by S-adenosyl-l-homocysteine. Weakly inhibited in vitro by amodiaquine, chloroquine and primaquine. Inhibited by NSC-158011. Catalyzes N-methylation of phosphoethanolamine, phosphomonomethylethanolamine and phosphodimethylethanolamine, the three methylation steps required to convert phosphoethanolamine to phosphocholine. Has no ethanolamine- or phosphatidylethanolamine-N-methyltransferase activity. Required for gametocyte development, maturation and transmission to mosquitoes and for oocyst formation in the mosquito midgut. The sequence is that of Phosphoethanolamine N-methyltransferase from Plasmodium falciparum (isolate 3D7).